We begin with the raw amino-acid sequence, 1184 residues long: DNA-directed RNA polymerase subunit beta' (1184 aa).

Residues C60, C62, C75, and C78 each contribute to the Zn(2+) site. Residues D449, D451, and D453 each coordinate Mg(2+). Zn(2+)-binding residues include C794, C867, C874, and C877. Residues 1165–1184 (NDQQERQDKEKEETEVKASN) are disordered.

Belongs to the RNA polymerase beta' chain family. As to quaternary structure, the RNAP catalytic core consists of 2 alpha, 1 beta, 1 beta' and 1 omega subunit. When a sigma factor is associated with the core the holoenzyme is formed, which can initiate transcription. Requires Mg(2+) as cofactor. It depends on Zn(2+) as a cofactor.

It carries out the reaction RNA(n) + a ribonucleoside 5'-triphosphate = RNA(n+1) + diphosphate. In terms of biological role, DNA-dependent RNA polymerase catalyzes the transcription of DNA into RNA using the four ribonucleoside triphosphates as substrates. This Thermoanaerobacter pseudethanolicus (strain ATCC 33223 / 39E) (Clostridium thermohydrosulfuricum) protein is DNA-directed RNA polymerase subunit beta'.